Consider the following 120-residue polypeptide: NAD(P)H-quinone oxidoreductase subunit 3, chloroplastic (120 aa).

Transmembrane regions (helical) follow at residues 9-29 (IFWAFLIISSLIPILVFFISG), 64-84 (MFALVFVVFDVETVFLYPWAM), and 88-108 (VLGVSVFVEALIFVLILIVGL).

This sequence belongs to the complex I subunit 3 family. In terms of assembly, NDH is composed of at least 16 different subunits, 5 of which are encoded in the nucleus.

The protein localises to the plastid. It localises to the chloroplast thylakoid membrane. The enzyme catalyses a plastoquinone + NADH + (n+1) H(+)(in) = a plastoquinol + NAD(+) + n H(+)(out). It catalyses the reaction a plastoquinone + NADPH + (n+1) H(+)(in) = a plastoquinol + NADP(+) + n H(+)(out). In terms of biological role, NDH shuttles electrons from NAD(P)H:plastoquinone, via FMN and iron-sulfur (Fe-S) centers, to quinones in the photosynthetic chain and possibly in a chloroplast respiratory chain. The immediate electron acceptor for the enzyme in this species is believed to be plastoquinone. Couples the redox reaction to proton translocation, and thus conserves the redox energy in a proton gradient. The sequence is that of NAD(P)H-quinone oxidoreductase subunit 3, chloroplastic from Lactuca sativa (Garden lettuce).